We begin with the raw amino-acid sequence, 282 residues long: Energy-coupling factor transporter ATP-binding protein EcfA1 (282 aa).

The ABC transporter domain maps to 6–243 (ISFDHVTFTY…VEMLKRIGLD (238 aa)). Position 40–47 (40–47 (GHNGSGKS)) interacts with ATP.

Belongs to the ABC transporter superfamily. Energy-coupling factor EcfA family. In terms of assembly, forms a stable energy-coupling factor (ECF) transporter complex composed of 2 membrane-embedded substrate-binding proteins (S component), 2 ATP-binding proteins (A component) and 2 transmembrane proteins (T component).

It localises to the cell membrane. In terms of biological role, ATP-binding (A) component of a common energy-coupling factor (ECF) ABC-transporter complex. Unlike classic ABC transporters this ECF transporter provides the energy necessary to transport a number of different substrates. The protein is Energy-coupling factor transporter ATP-binding protein EcfA1 of Lactobacillus delbrueckii subsp. bulgaricus (strain ATCC 11842 / DSM 20081 / BCRC 10696 / JCM 1002 / NBRC 13953 / NCIMB 11778 / NCTC 12712 / WDCM 00102 / Lb 14).